Consider the following 387-residue polypeptide: S-adenosylmethionine synthase (387 aa).

H15 serves as a coordination point for ATP. A Mg(2+)-binding site is contributed by D17. E43 is a K(+) binding site. The L-methionine site is built by E56 and Q99. Residues 99-109 (QSPDIALGVNR) are flexible loop. ATP-binding positions include 166 to 168 (DAK), 232 to 233 (RF), D241, 247 to 248 (RK), A264, and K268. D241 is an L-methionine binding site. K272 contacts L-methionine.

This sequence belongs to the AdoMet synthase family. Homotetramer; dimer of dimers. It depends on Mg(2+) as a cofactor. The cofactor is K(+).

It is found in the cytoplasm. It catalyses the reaction L-methionine + ATP + H2O = S-adenosyl-L-methionine + phosphate + diphosphate. Its pathway is amino-acid biosynthesis; S-adenosyl-L-methionine biosynthesis; S-adenosyl-L-methionine from L-methionine: step 1/1. Catalyzes the formation of S-adenosylmethionine (AdoMet) from methionine and ATP. The overall synthetic reaction is composed of two sequential steps, AdoMet formation and the subsequent tripolyphosphate hydrolysis which occurs prior to release of AdoMet from the enzyme. The chain is S-adenosylmethionine synthase from Nitrosomonas eutropha (strain DSM 101675 / C91 / Nm57).